Consider the following 244-residue polypeptide: Glutathione S-transferase theta-2 (244 aa).

Positions 2–82 (GLELYLDLLS…YLSSKYQVAD (81 aa)) constitute a GST N-terminal domain. Glutathione contacts are provided by residues 40-41 (HL), 53-54 (KV), 66-67 (ES), and 104-107 (DNIR). One can recognise a GST C-terminal domain in the interval 88–230 (DLQARAQVHE…AKKTLPVPPP (143 aa)).

It belongs to the GST superfamily. Theta family. Homodimer. Highest values found in liver followed by testis, adrenal gland, kidney, lung, brain and skeletal muscle. In liver, highest expression found in central vein limiting plate hepatocytes. In lung, expressed mainly in club cells of the bronchiolar epithelium and, at low levels, in type II alveolar cells.

Its subcellular location is the cytoplasm. It is found in the cytosol. It localises to the nucleus. It catalyses the reaction RX + glutathione = an S-substituted glutathione + a halide anion + H(+). Its function is as follows. Catalyzes the inactivation of reactive sulfate esters in carcinogenic arylmethanols. Highest activity towards ethacrynic acid and cumene hydroperoxide. The protein is Glutathione S-transferase theta-2 (Gstt2) of Rattus norvegicus (Rat).